We begin with the raw amino-acid sequence, 79 residues long: Small ribosomal subunit protein bS18 (79 aa).

The protein belongs to the bacterial ribosomal protein bS18 family. As to quaternary structure, part of the 30S ribosomal subunit. Forms a tight heterodimer with protein bS6.

In terms of biological role, binds as a heterodimer with protein bS6 to the central domain of the 16S rRNA, where it helps stabilize the platform of the 30S subunit. This Afipia carboxidovorans (strain ATCC 49405 / DSM 1227 / KCTC 32145 / OM5) (Oligotropha carboxidovorans) protein is Small ribosomal subunit protein bS18.